We begin with the raw amino-acid sequence, 273 residues long: Soluble P-type ATPase-like phosphatase (273 aa).

The active-site 4-aspartylphosphate intermediate is Asp8.

The protein belongs to the cation transport ATPase (P-type) (TC 3.A.3) family. Type IB subfamily. The cofactor is Mg(2+).

Inhibited by orthovanadate. Its function is as follows. Most probably acts as a phosphatase in the cytosol. The polypeptide is Soluble P-type ATPase-like phosphatase (patS) (Methanocaldococcus jannaschii (strain ATCC 43067 / DSM 2661 / JAL-1 / JCM 10045 / NBRC 100440) (Methanococcus jannaschii)).